We begin with the raw amino-acid sequence, 152 residues long: Transcriptional repressor NrdR (152 aa).

A zinc finger lies at 3-34; the sequence is CPYCQHPDSDVIDTRKLHNGETIRRRRKCEAC. Residues 49–139 enclose the ATP-cone domain; sequence ITVVKKNGER…VYRSFADIGK (91 aa).

The protein belongs to the NrdR family. Requires Zn(2+) as cofactor.

Its function is as follows. Negatively regulates transcription of bacterial ribonucleotide reductase nrd genes and operons by binding to NrdR-boxes. The polypeptide is Transcriptional repressor NrdR (Roseiflexus castenholzii (strain DSM 13941 / HLO8)).